A 327-amino-acid polypeptide reads, in one-letter code: ATP-dependent (S)-NAD(P)H-hydrate dehydratase (327 aa).

Positions 11–313 (LLTRVKRIIP…RHVGKAYNAL (303 aa)) constitute a YjeF C-terminal domain. (6S)-NADPHX is bound by residues Gly121 and 174–180 (NVIEFKR). Residues 209-213 (KGQSD) and 228-237 (GGLKRCGGQG) contribute to the ATP site. Asp238 is a binding site for (6S)-NADPHX.

It belongs to the NnrD/CARKD family. The cofactor is Mg(2+).

Its subcellular location is the cytoplasm. It carries out the reaction (6S)-NADHX + ATP = ADP + phosphate + NADH + H(+). It catalyses the reaction (6S)-NADPHX + ATP = ADP + phosphate + NADPH + H(+). Functionally, catalyzes the dehydration of the S-form of NAD(P)HX at the expense of ATP, which is converted to ADP. Together with NAD(P)HX epimerase, which catalyzes the epimerization of the S- and R-forms, the enzyme allows the repair of both epimers of NAD(P)HX, a damaged form of NAD(P)H that is a result of enzymatic or heat-dependent hydration. The chain is ATP-dependent (S)-NAD(P)H-hydrate dehydratase from Schizosaccharomyces pombe (strain 972 / ATCC 24843) (Fission yeast).